The following is a 347-amino-acid chain: Beta carbonic anhydrase 1, chloroplastic (347 aa).

The N-terminal 113 residues, M1–A113, are a transit peptide targeting the chloroplast. At A114 the chain carries N-acetylalanine. S175 carries the post-translational modification Phosphoserine. The residue at position 203 (Y203) is a Phosphotyrosine. Residue S266 is modified to Phosphoserine. Position 280 is an S-nitrosocysteine (C280).

It belongs to the beta-class carbonic anhydrase family. As to quaternary structure, homohexamer. Post-translationally, S-nitrosylation at Cys-280 is up-regulated during nitrosative burst and suppresses both binding of salicylic acid and carbonic anhydrase activity. S-nitrosylated in response to an avirulent but not to a virulent bacterial strain. Strongly expressed in aerial tissues including leaves, stems, flowers and siliques. Accumulates in both guard cells and mesophyll cells.

The protein localises to the plastid. It localises to the chloroplast stroma. It is found in the cell membrane. The enzyme catalyses hydrogencarbonate + H(+) = CO2 + H2O. Reversible hydration of carbon dioxide. Required for photosynthesis in cotyledons. Binds salicylic acid. Together with BCA4, involved in the CO(2) signaling pathway which controls gas-exchange between plants and the atmosphere by modulating stomatal development and movements. Promotes water use efficiency. The protein is Beta carbonic anhydrase 1, chloroplastic of Arabidopsis thaliana (Mouse-ear cress).